The chain runs to 264 residues: 3-methyl-2-oxobutanoate hydroxymethyltransferase (264 aa).

Mg(2+)-binding residues include aspartate 45 and aspartate 84. Residues 45 to 46 (DS), aspartate 84, and lysine 112 contribute to the 3-methyl-2-oxobutanoate site. Glutamate 114 lines the Mg(2+) pocket. The active-site Proton acceptor is the glutamate 181.

Belongs to the PanB family. In terms of assembly, homodecamer; pentamer of dimers. It depends on Mg(2+) as a cofactor.

The protein localises to the cytoplasm. It carries out the reaction 3-methyl-2-oxobutanoate + (6R)-5,10-methylene-5,6,7,8-tetrahydrofolate + H2O = 2-dehydropantoate + (6S)-5,6,7,8-tetrahydrofolate. The protein operates within cofactor biosynthesis; (R)-pantothenate biosynthesis; (R)-pantoate from 3-methyl-2-oxobutanoate: step 1/2. Catalyzes the reversible reaction in which hydroxymethyl group from 5,10-methylenetetrahydrofolate is transferred onto alpha-ketoisovalerate to form ketopantoate. The sequence is that of 3-methyl-2-oxobutanoate hydroxymethyltransferase from Shewanella frigidimarina (strain NCIMB 400).